The chain runs to 762 residues: cGMP-dependent protein kinase 2 (762 aa).

The tract at residues 1 to 25 (MGNGSVKPKHSKHPDGHSGNLTTDA) is disordered. Gly-2 carries the N-myristoyl glycine lipid modification. Positions 23–85 (TDALRNKVTE…CIQLNKLQDV (63 aa)) form a coiled coil. A phosphoserine mark is found at Ser-110 and Ser-117. Positions 117-138 (SRRGAKAGVSAEPTTRTYDLNK) are disordered. The tract at residues 168 to 283 (FLKRLDPQQI…DEQYRNFLRS (116 aa)) is cGMP-binding, high affinity; cAMP-binding, moderate affinity. 3',5'-cyclic AMP-binding positions include 232-235 (GELA) and 242-243 (RT). 3',5'-cyclic GMP-binding positions include 232-235 (GELA), 242-243 (RT), Lys-347, 356-359 (GEKA), 366-367 (RS), Asp-412, and Arg-415. A cGMP-binding, high affinity; cAMP-binding, low affinity region spans residues 286-416 (LLKNLPEDKL…NLNRDDEKRH (131 aa)). Ser-431 carries the post-translational modification Phosphoserine. The 259-residue stretch at 453 to 711 (LEIIATLGVG…INDIKKHRWL (259 aa)) folds into the Protein kinase domain. ATP-binding positions include 459 to 467 (LGVGGFGRV) and Lys-482. Residue Asp-576 is the Proton acceptor of the active site. Thr-609 carries the phosphothreonine modification. Positions 712-762 (NGFNWEGLKARSLPSPLQRELKGPIDHSYFDKYPPEKGMPPDELSGWDKDF) constitute an AGC-kinase C-terminal domain. Residues 740–762 (YFDKYPPEKGMPPDELSGWDKDF) form a disordered region.

Belongs to the protein kinase superfamily. AGC Ser/Thr protein kinase family. cGMP subfamily. Interacts with GRIA1/GLUR1. Post-translationally, myristoylation mediates membrane localization. As to expression, highly concentrated in brain, lung and intestinal mucosa.

It is found in the apical cell membrane. It catalyses the reaction L-seryl-[protein] + ATP = O-phospho-L-seryl-[protein] + ADP + H(+). It carries out the reaction L-threonyl-[protein] + ATP = O-phospho-L-threonyl-[protein] + ADP + H(+). Binding of cGMP results in enzyme activation. In terms of biological role, crucial regulator of intestinal secretion and bone growth. Phosphorylates and activates CFTR on the plasma membrane. Plays a key role in intestinal secretion by regulating cGMP-dependent translocation of CFTR in jejunum. Acts downstream of NMDAR to activate the plasma membrane accumulation of GRIA1/GLUR1 in synapse and increase synaptic plasticity. Phosphorylates GRIA1/GLUR1 at Ser-863. Acts as a regulator of gene expression and activator of the extracellular signal-regulated kinases MAPK3/ERK1 and MAPK1/ERK2 in mechanically stimulated osteoblasts. Under fluid shear stress, mediates ERK activation and subsequent induction of FOS, FOSL1/FRA1, FOSL2/FRA2 and FOSB that play a key role in the osteoblast anabolic response to mechanical stimulation. The sequence is that of cGMP-dependent protein kinase 2 (PRKG2) from Homo sapiens (Human).